The sequence spans 156 residues: MTKMNVESFNLDHTKVVAPFIRLAGTMEGLNGDVIYKYDIRFKQPNKEHMDMPGLHSLEHLMAENIRNHSDKVVDLSPMGCQTGFYVSFINHDNYDDVLNIVEATLNDVLNATEVPACNEVQCGWAASHSLEGAKTIAQAFLDKRNEWHDVFGTGK.

Fe cation contacts are provided by H56, H60, and C123.

The protein belongs to the LuxS family. Homodimer. Fe cation serves as cofactor.

It catalyses the reaction S-(5-deoxy-D-ribos-5-yl)-L-homocysteine = (S)-4,5-dihydroxypentane-2,3-dione + L-homocysteine. Involved in the synthesis of autoinducer 2 (AI-2) which is secreted by bacteria and is used to communicate both the cell density and the metabolic potential of the environment. The regulation of gene expression in response to changes in cell density is called quorum sensing. Catalyzes the transformation of S-ribosylhomocysteine (RHC) to homocysteine (HC) and 4,5-dihydroxy-2,3-pentadione (DPD). The protein is S-ribosylhomocysteine lyase of Staphylococcus aureus (strain bovine RF122 / ET3-1).